Reading from the N-terminus, the 191-residue chain is Endoribonuclease YbeY (191 aa).

The Zn(2+) site is built by histidine 122, histidine 126, and histidine 132. Positions 164 to 191 (QPKPSGPKAFPDAAERAELDKEVPGGGI) are disordered. The segment covering 176–191 (AAERAELDKEVPGGGI) has biased composition (basic and acidic residues).

It belongs to the endoribonuclease YbeY family. Zn(2+) serves as cofactor.

Its subcellular location is the cytoplasm. Functionally, single strand-specific metallo-endoribonuclease involved in late-stage 70S ribosome quality control and in maturation of the 3' terminus of the 16S rRNA. The sequence is that of Endoribonuclease YbeY from Corynebacterium aurimucosum (strain ATCC 700975 / DSM 44827 / CIP 107346 / CN-1) (Corynebacterium nigricans).